The sequence spans 608 residues: Probable adenylate kinase 5, chloroplastic (608 aa).

The segment covering 1 to 20 (MAASSSSSSPAAASAPFAAP) has biased composition (low complexity). A disordered region spans residues 1–44 (MAASSSSSSPAAASAPFAAPGPHRRPGLALRPSPPTPPSSSLSC). The N-terminal 75 residues, 1–75 (MAASSSSSSP…GPRGMGLRCR (75 aa)), are a transit peptide targeting the chloroplast. Residue 99 to 104 (ASGKGT) coordinates ATP. The NMP stretch occupies residues 119–148 (STGDLLRAEVSSGTEIGKKAKEYMDNGMLV). AMP is bound by residues threonine 120, arginine 125, 146–148 (MLV), 175–178 (GYPR), and glutamine 182. ATP-binding positions include arginine 209, arginine 213, and 222-223 (IY). Residues 212-245 (GRRLDPETGKIYHIKNFPPENDEVSARLVTRSDD) form an LID region. Arginine 242 and arginine 253 together coordinate AMP.

It belongs to the adenylate kinase family.

The protein localises to the plastid. It localises to the chloroplast. It catalyses the reaction AMP + ATP = 2 ADP. In terms of biological role, catalyzes the reversible transfer of the terminal phosphate group between ATP and AMP. Plays an important role in cellular energy homeostasis and in adenine nucleotide metabolism. This chain is Probable adenylate kinase 5, chloroplastic, found in Oryza sativa subsp. japonica (Rice).